The sequence spans 186 residues: Lipid A palmitoyltransferase PagP (186 aa).

Residues 1–25 (MNVSKYVAIFFFVFIQLISVGKVFA) form the signal peptide. Active-site residues include His58, Asp101, and Ser102.

This sequence belongs to the lipid A palmitoyltransferase family. As to quaternary structure, homodimer.

The protein localises to the cell outer membrane. It carries out the reaction lipid A (E. coli) + a 1-hexadecanoyl-2-acyl-sn-glycero-3-phosphocholine = hepta-acyl lipid A (E. coli) + a 2-acyl-sn-glycero-3-phosphocholine. The enzyme catalyses lipid IIA + a 1-hexadecanoyl-2-acyl-sn-glycero-3-phosphocholine = lipid IIB + a 2-acyl-sn-glycero-3-phosphocholine. The catalysed reaction is lipid IVA (E. coli) + a 1-hexadecanoyl-2-acyl-sn-glycero-3-phosphocholine = lipid IVB (E. coli) + a 2-acyl-sn-glycero-3-phosphocholine. Functionally, transfers a palmitate residue from the sn-1 position of a phospholipid to the N-linked hydroxymyristate on the proximal unit of lipid A or its precursors. This is Lipid A palmitoyltransferase PagP from Escherichia coli O6:H1 (strain CFT073 / ATCC 700928 / UPEC).